A 29-amino-acid polypeptide reads, in one-letter code: Chassatide C1 (29 aa).

A cross-link (cyclopeptide (Gly-Asn)) is located at residues 1-29; sequence GDACGETCFTGICFTAGCSCNPWPTCTRN. Intrachain disulfides connect cysteine 4/cysteine 18, cysteine 8/cysteine 20, and cysteine 13/cysteine 26.

In terms of processing, this is a cyclic peptide. As to expression, expressed in leaf, fruit, pedical and stem but not in root (at protein level).

Probably participates in a plant defense mechanism. This is Chassatide C1 from Chassalia chartacea (Chassalia curviflora).